Reading from the N-terminus, the 246-residue chain is Sulfate transporter CysZ (246 aa).

Transmembrane regions (helical) follow at residues 24-44 (LFVL…IGFA), 69-89 (IVWP…FTMV), 148-168 (LLVL…WILF), and 214-234 (LLIP…ATLF).

The protein belongs to the CysZ family.

The protein resides in the cell inner membrane. In terms of biological role, high affinity, high specificity proton-dependent sulfate transporter, which mediates sulfate uptake. Provides the sulfur source for the cysteine synthesis pathway. This Pseudomonas aeruginosa (strain ATCC 15692 / DSM 22644 / CIP 104116 / JCM 14847 / LMG 12228 / 1C / PRS 101 / PAO1) protein is Sulfate transporter CysZ.